The following is a 354-amino-acid chain: DNA ligase C2 (354 aa).

The active-site N6-AMP-lysine intermediate is the lysine 29.

The protein belongs to the ATP-dependent DNA ligase family.

It catalyses the reaction ATP + (deoxyribonucleotide)n-3'-hydroxyl + 5'-phospho-(deoxyribonucleotide)m = (deoxyribonucleotide)n+m + AMP + diphosphate.. Its function is as follows. DNA ligase that seals nicks in double-stranded DNA during DNA replication, DNA recombination and DNA repair. Has weak intrinsic nick joining activities and accumulates DNA-adenylate. Acts as a backup for LigD in the Ku-LigD-dependent NHEJ pathway. In Mycolicibacterium smegmatis (strain ATCC 700084 / mc(2)155) (Mycobacterium smegmatis), this protein is DNA ligase C2 (ligC2).